Consider the following 246-residue polypeptide: UDP-N-acetyl-D-mannosaminuronic acid transferase (246 aa).

The protein belongs to the glycosyltransferase 26 family.

The enzyme catalyses UDP-N-acetyl-alpha-D-mannosaminouronate + N-acetyl-alpha-D-glucosaminyl-di-trans,octa-cis-undecaprenyl diphosphate = beta-D-ManNAcA-(1-&gt;4)-alpha-D-GlcNAc-di-trans,octa-cis-undecaprenyl diphosphate + UDP + H(+). It participates in bacterial outer membrane biogenesis; enterobacterial common antigen biosynthesis. In terms of biological role, catalyzes the synthesis of Und-PP-GlcNAc-ManNAcA (Lipid II), the second lipid-linked intermediate involved in enterobacterial common antigen (ECA) synthesis. This Escherichia fergusonii (strain ATCC 35469 / DSM 13698 / CCUG 18766 / IAM 14443 / JCM 21226 / LMG 7866 / NBRC 102419 / NCTC 12128 / CDC 0568-73) protein is UDP-N-acetyl-D-mannosaminuronic acid transferase.